A 966-amino-acid polypeptide reads, in one-letter code: Collagen alpha-1(I) chain (966 aa).

Residues 1-966 (SYGYDEKSAG…PGPPGPPGPP (966 aa)) are disordered. K7 carries the allysine modification. S8 carries the phosphoserine modification. 4-hydroxyproline is present on residues P27, P30, P32, P41, P44, P47, P61, P76, P82, P91, and P97. The segment covering 64-78 (NGDDGEAGKPGRPGE) has biased composition (basic and acidic residues). K100 bears the 5-hydroxylysine; alternate mark. O-linked (Gal...) hydroxylysine; alternate glycosylation is present at K100. The residue at position 106 (S106) is a Phosphoserine. Residues 114–130 (DAGPAGPKGEPGSPGEN) are compositionally biased toward low complexity. 16 positions are modified to 4-hydroxyproline: P124, P127, P133, P142, P148, P169, P178, P181, P208, P211, P223, P229, P238, P244, P247, and P262. Over residues 148–166 (PGASGPAGARGNDGATGAA) the composition is skewed to low complexity. Residues 168 to 180 (PPGPTGPAGPPGF) show a composition bias toward pro residues. Positions 214-253 (AGAAGPAGNPGADGQPGAKGANGAPGIAGAPGFPGARGPS) are enriched in low complexity. A 5-hydroxylysine modification is found at K265. 4-hydroxyproline is present on residues P271, P274, P286, P295, P310, P316, P325, and P331. Over residues 320–329 (GERGGPGSRG) the composition is skewed to gly residues. K340 carries the post-translational modification 5-hydroxylysine. 4-hydroxyproline is present on residues P349, P358, P364, P370, P379, P382, P391, P400, P406, P418, P427, P436, P439, P457, P475, P481, P487, P493, P499, P505, P517, P526, P538, P542, P548, P554, and P563. Positions 373–399 (KGLTGSPGSPGPDGKTGPPGPAGQDGR) are enriched in low complexity. The segment covering 408–427 (ARGQAGVMGFPGPKGAAGEP) has biased composition (low complexity). Residues 469–496 (QGPAGSPGFQGLPGPAGPPGEAGKPGEQ) are compositionally biased toward low complexity. Residue K575 is modified to 5-hydroxylysine. A 4-hydroxyproline mark is found at P581, P596, and P602. A compositionally biased stretch (low complexity) spans 608 to 622 (SGPSGPAGPTGARGA). S611 carries the post-translational modification Phosphoserine. 8 positions are modified to 4-hydroxyproline: P623, P629, P632, P641, P647, P665, P674, and P683. Residues 635–662 (AGFAGPPGADGQPGAKGEPGDAGAKGDA) are compositionally biased toward low complexity. Over residues 664 to 676 (PPGPAGPTGPPGP) the composition is skewed to pro residues. At K686 the chain carries 5-hydroxylysine. Residues 691-707 (SAGPPGATGFPGAAGRV) show a composition bias toward low complexity. A 4-hydroxyproline mark is found at P695 and P701. P709 is subject to 3-hydroxyproline. 14 positions are modified to 4-hydroxyproline: P710, P719, P722, P746, P755, P773, P782, P785, P791, P806, P812, P818, P826, and P832. Residues 736 to 755 (ETGPAGEKGSPGADGPAGAP) show a composition bias toward low complexity. The span at 805 to 815 (PPGPVGPPGLA) shows a compositional bias: pro residues. The span at 824–835 (EGPGAEGSPGRG) shows a compositional bias: gly residues. Residues 852–866 (AGPAGARGPAGPQGP) are compositionally biased toward low complexity. Positions 867–881 (RGDKGETGEQGDRGI) are enriched in basic and acidic residues. K870 is modified (5-hydroxylysine). K882 is subject to 5-hydroxylysine; alternate. O-linked (Gal...) hydroxylysine; alternate glycosylation occurs at K882. 4-hydroxyproline is present on residues P897, P900, P918, and P933. Residues 900–933 (PGEQGPSGASGPAGPRGPPGSAGSPGKDGLNGLP) are compositionally biased toward low complexity. A 3-hydroxyproline modification is found at P938. P939 carries the post-translational modification 4-hydroxyproline. A compositionally biased stretch (pro residues) spans 951–966 (VGPPGPPGPPGPPGPP). At P953 the chain carries 3-hydroxyproline. At P954 the chain carries 4-hydroxyproline. The residue at position 956 (P956) is a 3-hydroxyproline. At P957 the chain carries 4-hydroxyproline. 3-hydroxyproline is present on P959. 4-hydroxyproline is present on residues P960, P963, and P966.

This sequence belongs to the fibrillar collagen family. In terms of assembly, trimers of one alpha 2(I) and two alpha 1(I) chains. In terms of processing, contains mostly 4-hydroxyproline. Proline residues at the third position of the tripeptide repeating unit (G-X-Y) are hydroxylated in some or all of the chains. Contains 3-hydroxyproline at a few sites. This modification occurs on the first proline residue in the sequence motif Gly-Pro-Hyp, where Hyp is 4-hydroxyproline. Post-translationally, lysine residues at the third position of the tripeptide repeating unit (G-X-Y) are 5-hydroxylated in some or all of the chains. In terms of processing, O-glycosylated on hydroxylated lysine residues. The O-linked glycan consists of a Glc-Gal disaccharide. As to expression, expressed in bones.

It localises to the secreted. It is found in the extracellular space. The protein resides in the extracellular matrix. Type I collagen is a member of group I collagen (fibrillar forming collagen). The sequence is that of Collagen alpha-1(I) chain from Bradypus variegatus (Brown-throated three-fingered sloth).